The primary structure comprises 125 residues: Aspartate 1-decarboxylase (125 aa).

The Schiff-base intermediate with substrate; via pyruvic acid role is filled by serine 25. Serine 25 carries the pyruvic acid (Ser) modification. Threonine 57 provides a ligand contact to substrate. Catalysis depends on tyrosine 58, which acts as the Proton donor. 71 to 73 contributes to the substrate binding site; sequence GAA.

It belongs to the PanD family. Heterooctamer of four alpha and four beta subunits. Pyruvate serves as cofactor. Post-translationally, is synthesized initially as an inactive proenzyme, which is activated by self-cleavage at a specific serine bond to produce a beta-subunit with a hydroxyl group at its C-terminus and an alpha-subunit with a pyruvoyl group at its N-terminus.

The protein resides in the cytoplasm. The catalysed reaction is L-aspartate + H(+) = beta-alanine + CO2. It functions in the pathway cofactor biosynthesis; (R)-pantothenate biosynthesis; beta-alanine from L-aspartate: step 1/1. Functionally, catalyzes the pyruvoyl-dependent decarboxylation of aspartate to produce beta-alanine. The polypeptide is Aspartate 1-decarboxylase (Hydrogenobaculum sp. (strain Y04AAS1)).